The primary structure comprises 144 residues: Thyrostimulin alpha-2 subunit (144 aa).

The N-terminal stretch at 1 to 41 (MGRRDSGRAVAQRYRGVTRGVTVIACLMVVCACVGLCDATG) is a signal peptide. 4 disulfide bridges follow: Cys-52-Cys-107, Cys-66-Cys-121, Cys-76-Cys-136, and Cys-80-Cys-138.

The protein belongs to the glycoprotein hormones subunit alpha family. As to quaternary structure, heterodimer with GPHB5; non-covalently-linked. Expressed by the venom duct.

It is found in the secreted. The protein is Thyrostimulin alpha-2 subunit of Conus victoriae (Queen Victoria cone).